The primary structure comprises 273 residues: Bifunctional protein FolD (273 aa).

Residues 152–154 (GRS), Thr-179, and Ile-220 contribute to the NADP(+) site.

The protein belongs to the tetrahydrofolate dehydrogenase/cyclohydrolase family. In terms of assembly, homodimer.

It catalyses the reaction (6R)-5,10-methylene-5,6,7,8-tetrahydrofolate + NADP(+) = (6R)-5,10-methenyltetrahydrofolate + NADPH. The enzyme catalyses (6R)-5,10-methenyltetrahydrofolate + H2O = (6R)-10-formyltetrahydrofolate + H(+). It participates in one-carbon metabolism; tetrahydrofolate interconversion. Its function is as follows. Catalyzes the oxidation of 5,10-methylenetetrahydrofolate to 5,10-methenyltetrahydrofolate and then the hydrolysis of 5,10-methenyltetrahydrofolate to 10-formyltetrahydrofolate. The protein is Bifunctional protein FolD of Petrotoga mobilis (strain DSM 10674 / SJ95).